The sequence spans 762 residues: LON peptidase N-terminal domain and RING finger protein 1 (762 aa).

Residues 1–35 form a disordered region; that stretch reads MSSPAVARASPGGNREASGGPRSRNGPWEVGGGGE. The TPR 1 repeat unit spans residues 47–80; that stretch reads WELLLRRGELLALGGHLKGALEAFAAALRRGAPA. The RING-type 1 zinc finger occupies 118 to 154; it reads CLSCRGFLSEPVTVPCGHSYCRRCLRRELRARCRLCR. 3 TPR repeats span residues 201–233, 235–267, and 268–301; these read ARAA…EPSD, TLKI…LPNW, and PEVY…DEDF. The residue at position 420 (Ser420) is a Phosphoserine. The RING-type 2 zinc-finger motif lies at 468-506; that stretch reads CSLCMRLFFEPVTTPCGHSFCKNCLERCLDHAPYCPLCK. The Lon N-terminal domain occupies 547 to 757; sequence TAELSHLTKN…KIQHILTYFS (211 aa).

This chain is LON peptidase N-terminal domain and RING finger protein 1 (Lonrf1), found in Mus musculus (Mouse).